Consider the following 246-residue polypeptide: 1-(5-phosphoribosyl)-5-[(5-phosphoribosylamino)methylideneamino] imidazole-4-carboxamide isomerase (246 aa).

Asp8 (proton acceptor) is an active-site residue. Asp131 functions as the Proton donor in the catalytic mechanism.

Belongs to the HisA/HisF family.

The protein resides in the cytoplasm. It carries out the reaction 1-(5-phospho-beta-D-ribosyl)-5-[(5-phospho-beta-D-ribosylamino)methylideneamino]imidazole-4-carboxamide = 5-[(5-phospho-1-deoxy-D-ribulos-1-ylimino)methylamino]-1-(5-phospho-beta-D-ribosyl)imidazole-4-carboxamide. The protein operates within amino-acid biosynthesis; L-histidine biosynthesis; L-histidine from 5-phospho-alpha-D-ribose 1-diphosphate: step 4/9. The chain is 1-(5-phosphoribosyl)-5-[(5-phosphoribosylamino)methylideneamino] imidazole-4-carboxamide isomerase from Lactococcus lactis subsp. cremoris (strain MG1363).